We begin with the raw amino-acid sequence, 277 residues long: Carbonyl reductase [NADPH] 3 (277 aa).

Ser-2 bears the N-acetylserine mark. NADP(+)-binding positions include 10 to 34 (VTGA…GDVV), 38 to 42 (RDEAR), 63 to 64 (DI), and Asn-90. Ser-30 bears the Phosphoserine mark. Ser-140 serves as a coordination point for substrate. Tyr-194 functions as the Proton acceptor in the catalytic mechanism. Residue 194–198 (YGVSK) participates in NADP(+) binding.

The protein belongs to the short-chain dehydrogenases/reductases (SDR) family.

The protein resides in the cytoplasm. The catalysed reaction is a secondary alcohol + NADP(+) = a ketone + NADPH + H(+). It catalyses the reaction a quinone + NADPH + H(+) = a quinol + NADP(+). In terms of biological role, catalyzes the NADPH-dependent reduction of carbonyl compounds to their corresponding alcohols. Has low NADPH-dependent oxidoreductase activity. Acts on several orthoquinones, as well as on non-quinone compounds, such as isatin or on the anticancer drug oracin. Best substrates for CBR3 is 1,2- naphthoquinone, hence could play a role in protection against cytotoxicity of exogenous quinones. Exerts activity toward ortho-quinones but not paraquinones. No endogenous substrate for CBR3 except isatin has been identified. The chain is Carbonyl reductase [NADPH] 3 from Rattus norvegicus (Rat).